A 153-amino-acid chain; its full sequence is Endoribonuclease YbeY (153 aa).

3 residues coordinate Zn(2+): His116, His120, and His126.

It belongs to the endoribonuclease YbeY family. The cofactor is Zn(2+).

It localises to the cytoplasm. In terms of biological role, single strand-specific metallo-endoribonuclease involved in late-stage 70S ribosome quality control and in maturation of the 3' terminus of the 16S rRNA. The chain is Endoribonuclease YbeY from Clavibacter sepedonicus (Clavibacter michiganensis subsp. sepedonicus).